Here is a 1531-residue protein sequence, read N- to C-terminus: Lysophospholipase nte1 (1531 aa).

Residues 1–72 (MATGDGIIAA…TPPAPSTMVG (72 aa)) lie on the Cytoplasmic side of the membrane. Residues 73–93 (WIGWIFSFIFQVIPSVLYWIV) form a helical membrane-spanning segment. Over 94 to 115 (TFTTITLPTWLFTLFSMSLTFT) the chain is Lumenal. A helical transmembrane segment spans residues 116–136 (MNFTTLLLIALAVVSTISWFI). At 137 to 1531 (RYRFLNMYSR…RTLAPRRASI (1395 aa)) the chain is on the cytoplasmic side. Disordered stretches follow at residues 242 to 265 (GSDE…PDGR), 303 to 385 (ASSA…TRRK), and 766 to 789 (NTSS…KQSR). Over residues 325–343 (REMDDSPHVYQGDRLDPAS) the composition is skewed to basic and acidic residues. A nucleoside 3',5'-cyclic phosphate is bound by residues 689–809 (GGTS…AVAS) and 849–969 (RLTS…IAQR). Low complexity predominate over residues 768–779 (SSSRVSGSAAAA). The region spanning 1228–1392 (LVLGGGGARG…IDNLTVDHMK (165 aa)) is the PNPLA domain. Residues 1232 to 1237 (GGGARG) carry the GXGXXG motif. Positions 1259–1263 (GTSIG) match the GXSXG motif. The Nucleophile role is filled by serine 1261. Aspartate 1379 functions as the Proton acceptor in the catalytic mechanism. The DGA/G signature appears at 1379-1381 (DGG). The tract at residues 1510 to 1531 (LPEETEEKKKLQRTLAPRRASI) is disordered.

It belongs to the NTE family.

Its subcellular location is the endoplasmic reticulum membrane. It catalyses the reaction a 1-acyl-sn-glycero-3-phosphocholine + H2O = sn-glycerol 3-phosphocholine + a fatty acid + H(+). Inhibited by organophosphorus esters. Functionally, intracellular phospholipase B that catalyzes the double deacylation of phosphatidylcholine (PC) to glycerophosphocholine (GroPCho). Plays an important role in membrane lipid homeostasis. Responsible for the rapid PC turnover in response to inositol, elevated temperatures, or when choline is present in the growth medium. The sequence is that of Lysophospholipase nte1 (nte1) from Aspergillus niger (strain ATCC MYA-4892 / CBS 513.88 / FGSC A1513).